The following is a 380-amino-acid chain: MKNEMLALILAGGQGTRLGKLTQSIAKPAVQFGGRYRIIDFALSNCANSGIHNVGVVTQYQPLALNNHIGNGSSWGLDGINSGVSILQPYSASEGNRWFEGTSHAIYQNIDYIDSVNPEYVLILSGDHIYKMDYDDMLQSHKDNNASLTVAVLDVPLKEASRFGIMNTDANNRIVEFEEKPAQPKSTKASMGIYIFDWQRLRNMLVAAEKSKVGMSDFGKNVIPNYLESGESVYAYEFSGYWKDVGTIESLWEANMEYISPENALDSRNRQWKIYSRNLISPPNFLGANAHVEDSLVVDGCFVDGTVKHSILSTGAQVREGAEILDSVIMSGAIIGQGAKIKRAIIGEGAIISDGVEIDGTDEVQVVGYNEVVGVATDED.

Alpha-D-glucose 1-phosphate contacts are provided by residues Gly164, 179–180, and Ser190; that span reads EK.

It belongs to the bacterial/plant glucose-1-phosphate adenylyltransferase family. Homotetramer.

The catalysed reaction is alpha-D-glucose 1-phosphate + ATP + H(+) = ADP-alpha-D-glucose + diphosphate. Its pathway is glycan biosynthesis; glycogen biosynthesis. Its function is as follows. Involved in the biosynthesis of ADP-glucose, a building block required for the elongation reactions to produce glycogen. Catalyzes the reaction between ATP and alpha-D-glucose 1-phosphate (G1P) to produce pyrophosphate and ADP-Glc. The protein is Glucose-1-phosphate adenylyltransferase of Streptococcus pneumoniae (strain 70585).